The chain runs to 141 residues: Large ribosomal subunit protein uL6 (141 aa).

This sequence belongs to the universal ribosomal protein uL6 family.

The protein is Large ribosomal subunit protein uL6 of Haemonchus contortus (Barber pole worm).